Here is a 157-residue protein sequence, read N- to C-terminus: Nascent polypeptide-associated complex subunit beta (157 aa).

The disordered stretch occupies residues 1–28; that stretch reads MPVDPEKLAKLQKSSAKKVGGSRVKAKK. Residues 33 to 98 form the NAC-A/B domain; that stretch reads EQDDTKLIEA…PQEKNITQLI (66 aa). Positions 124–157 are disordered; sequence KTPKDFNTGSANAAADAGGEDIPDLVDQKFDDVE.

The protein belongs to the NAC-beta family. As to quaternary structure, part of the nascent polypeptide-associated complex (NAC), consisting of EGD2 and EGD1. NAC associates with ribosomes via EGD1.

The protein resides in the cytoplasm. Its subcellular location is the nucleus. Its function is as follows. Component of the nascent polypeptide-associated complex (NAC), a dynamic component of the ribosomal exit tunnel, protecting the emerging polypeptides from interaction with other cytoplasmic proteins to ensure appropriate nascent protein targeting. The NAC complex also promotes mitochondrial protein import by enhancing productive ribosome interactions with the outer mitochondrial membrane and blocks the inappropriate interaction of ribosomes translating non-secretory nascent polypeptides with translocation sites in the membrane of the endoplasmic reticulum. EGD1 may act as a transcription factor that exert a negative effect on the expression of several genes that are transcribed by RNA polymerase II. In Candida albicans (strain SC5314 / ATCC MYA-2876) (Yeast), this protein is Nascent polypeptide-associated complex subunit beta (EGD1).